We begin with the raw amino-acid sequence, 193 residues long: Xanthine phosphoribosyltransferase (193 aa).

Positions 20 and 27 each coordinate xanthine. A 5-phospho-alpha-D-ribose 1-diphosphate-binding site is contributed by 128–132 (ANGQA). K156 contacts xanthine.

This sequence belongs to the purine/pyrimidine phosphoribosyltransferase family. Xpt subfamily. As to quaternary structure, homodimer.

It is found in the cytoplasm. The catalysed reaction is XMP + diphosphate = xanthine + 5-phospho-alpha-D-ribose 1-diphosphate. It functions in the pathway purine metabolism; XMP biosynthesis via salvage pathway; XMP from xanthine: step 1/1. Functionally, converts the preformed base xanthine, a product of nucleic acid breakdown, to xanthosine 5'-monophosphate (XMP), so it can be reused for RNA or DNA synthesis. This is Xanthine phosphoribosyltransferase from Streptococcus gordonii (strain Challis / ATCC 35105 / BCRC 15272 / CH1 / DL1 / V288).